Here is a 309-residue protein sequence, read N- to C-terminus: MVKVYAPASIGNVSVGFDVLGAAVSPIDGTLLGDCVSVEAAETFSLQNAGRFVSKLPAEPKENIVYQCWERFCQEIGREVPVAMRLEKNMPIGSGLGSSACSVVAGLMAMNEFCDRPLDKTTLLGLMGELEGRISGSVHYDNVAPCYLGGLQLMLEEEGIISQEVPCFDDWLWVMAYPGIKVSTAEARAILPAQYRRQDCISHGRYLAGFIHACHTRQPQLAAKLMQDVIAEPYRTRLLPGFAEARKAAQEIGALACGISGSGPTLFAVCNDGATAQRMAAWLQQHYLQNDEGFVHICRLDTAGARLLG.

91 to 101 (PIGSGLGSSAC) is a binding site for ATP.

Belongs to the GHMP kinase family. Homoserine kinase subfamily.

Its subcellular location is the cytoplasm. It catalyses the reaction L-homoserine + ATP = O-phospho-L-homoserine + ADP + H(+). It participates in amino-acid biosynthesis; L-threonine biosynthesis; L-threonine from L-aspartate: step 4/5. Functionally, catalyzes the ATP-dependent phosphorylation of L-homoserine to L-homoserine phosphate. The sequence is that of Homoserine kinase (thrB) from Serratia marcescens.